The following is a 376-amino-acid chain: TelA-like protein SERP0976 (376 aa).

Belongs to the TelA family.

This is TelA-like protein SERP0976 from Staphylococcus epidermidis (strain ATCC 35984 / DSM 28319 / BCRC 17069 / CCUG 31568 / BM 3577 / RP62A).